A 489-amino-acid chain; its full sequence is Betaine aldehyde dehydrogenase (489 aa).

K(+) contacts are provided by threonine 26 and aspartate 93. An NAD(+)-binding site is contributed by 150–152 (GAW). Lysine 162 serves as the catalytic Charge relay system. 176 to 179 (KPSE) contacts NAD(+). Isoleucine 180 serves as a coordination point for K(+). 229 to 232 (GVET) contacts NAD(+). Leucine 245 provides a ligand contact to K(+). Glutamate 251 acts as the Proton acceptor in catalysis. NAD(+) contacts are provided by glycine 253, cysteine 285, and glutamate 386. The active-site Nucleophile is the cysteine 285. Cysteine 285 is modified (cysteine sulfenic acid (-SOH)). K(+) is bound by residues lysine 456 and glycine 459. Glutamate 463 acts as the Charge relay system in catalysis.

This sequence belongs to the aldehyde dehydrogenase family. In terms of assembly, dimer of dimers. The cofactor is K(+).

It carries out the reaction betaine aldehyde + NAD(+) + H2O = glycine betaine + NADH + 2 H(+). It functions in the pathway amine and polyamine biosynthesis; betaine biosynthesis via choline pathway; betaine from betaine aldehyde: step 1/1. Involved in the biosynthesis of the osmoprotectant glycine betaine. Catalyzes the irreversible oxidation of betaine aldehyde to the corresponding acid. The polypeptide is Betaine aldehyde dehydrogenase (Paraburkholderia phytofirmans (strain DSM 17436 / LMG 22146 / PsJN) (Burkholderia phytofirmans)).